The primary structure comprises 179 residues: Transcription factor E (179 aa).

The HTH TFE/IIEalpha-type domain occupies 1–102; the sequence is MAKKKVKYTF…YWRFDSRKAA (102 aa).

Belongs to the TFE family. As to quaternary structure, monomer. Interaction with RNA polymerase subunits RpoF and RpoE is necessary for Tfe stimulatory transcription activity. Able to interact with Tbp and RNA polymerase in the absence of DNA promoter. Interacts both with the preinitiation and elongation complexes.

Transcription factor that plays a role in the activation of archaeal genes transcribed by RNA polymerase. Facilitates transcription initiation by enhancing TATA-box recognition by TATA-box-binding protein (Tbp), and transcription factor B (Tfb) and RNA polymerase recruitment. Not absolutely required for transcription in vitro, but particularly important in cases where Tbp or Tfb function is not optimal. It dynamically alters the nucleic acid-binding properties of RNA polymerases by stabilizing the initiation complex and destabilizing elongation complexes. Seems to translocate with the RNA polymerase following initiation and acts by binding to the non template strand of the transcription bubble in elongation complexes. The chain is Transcription factor E from Methanosphaera stadtmanae (strain ATCC 43021 / DSM 3091 / JCM 11832 / MCB-3).